Consider the following 782-residue polypeptide: Endonuclease MutS2 (782 aa).

336–343 (GPNTGGKT) is an ATP binding site. One can recognise a Smr domain in the interval 707 to 782 (LDLRGYRYEE…GFGVTVAELK (76 aa)).

Belongs to the DNA mismatch repair MutS family. MutS2 subfamily. In terms of assembly, homodimer. Binds to stalled ribosomes, contacting rRNA.

Its function is as follows. Endonuclease that is involved in the suppression of homologous recombination and thus may have a key role in the control of bacterial genetic diversity. Functionally, acts as a ribosome collision sensor, splitting the ribosome into its 2 subunits. Detects stalled/collided 70S ribosomes which it binds and splits by an ATP-hydrolysis driven conformational change. Acts upstream of the ribosome quality control system (RQC), a ribosome-associated complex that mediates the extraction of incompletely synthesized nascent chains from stalled ribosomes and their subsequent degradation. Probably generates substrates for RQC. The polypeptide is Endonuclease MutS2 (Staphylococcus epidermidis (strain ATCC 35984 / DSM 28319 / BCRC 17069 / CCUG 31568 / BM 3577 / RP62A)).